The following is a 349-amino-acid chain: Isopentenyl-diphosphate delta-isomerase (349 aa).

Arginine 9–lysine 10 contacts substrate. Residues alanine 65 to threonine 67, serine 95, and asparagine 124 each bind FMN. Residue serine 95–histidine 97 coordinates substrate. Glutamine 154 serves as a coordination point for substrate. Glutamate 155 contributes to the Mg(2+) binding site. Residues lysine 186, serine 211, threonine 216, glycine 262–arginine 264, and serine 283–arginine 284 each bind FMN.

This sequence belongs to the IPP isomerase type 2 family. Homooctamer. Dimer of tetramers. Requires FMN as cofactor. The cofactor is NADPH. Mg(2+) is required as a cofactor.

It is found in the cytoplasm. The catalysed reaction is isopentenyl diphosphate = dimethylallyl diphosphate. Functionally, involved in the biosynthesis of isoprenoids. Catalyzes the 1,3-allylic rearrangement of the homoallylic substrate isopentenyl (IPP) to its allylic isomer, dimethylallyl diphosphate (DMAPP). The protein is Isopentenyl-diphosphate delta-isomerase of Staphylococcus aureus.